A 424-amino-acid polypeptide reads, in one-letter code: MKDNNNYNVLIVGNKGREYALAQRLQQDERVNALYFCLGNGGTQDLGENLECEHYEHIVELALKKQIHLAIISEEEPLILGLTEMLEKAGILVFGASKEAAKLEASKSYMKAFVKECGIKSASYFETNDLKEALNYIQNASFPLVIKALNKNTSIVHHQEEALKILEDALKQSNEPVIIEPFLEGFELSVTALIANDDFILLPFCQNYKRLLEGDNGVNTGGMGAIAPANFFSNELEEKIKNHIFKPTLEKLQADNTPFKGVLLAEIVIIEEKGVLEPYLLDFSVRFKDIECQTILPLVENPLLDLFLATAKGELHSLELVFSKEFVMSVALVSRNYPTSSSPKQTLYIDPVDEKKGHLILGEVEQDNGVFESSGGRVIFAIGRGKSLLEARNHAYEIAQKVHFEGMFYRKDIGFKVLDLKEYS.

One can recognise an ATP-grasp domain in the interval 111 to 312 (KAFVKECGIK…LLDLFLATAK (202 aa)). 137–189 (IQNASFPLVIKALNKNTSIVHHQEEALKILEDALKQSNEPVIIEPFLEGFELS) contacts ATP.

The protein belongs to the GARS family.

It catalyses the reaction 5-phospho-beta-D-ribosylamine + glycine + ATP = N(1)-(5-phospho-beta-D-ribosyl)glycinamide + ADP + phosphate + H(+). The protein operates within purine metabolism; IMP biosynthesis via de novo pathway; N(1)-(5-phospho-D-ribosyl)glycinamide from 5-phospho-alpha-D-ribose 1-diphosphate: step 2/2. This Helicobacter pylori (strain J99 / ATCC 700824) (Campylobacter pylori J99) protein is Phosphoribosylamine--glycine ligase (purD).